The chain runs to 116 residues: MANHRIDRVGMEIKREVNEILRLRVNDPRVQDVTITDVQMLGDLSMAKVFYTIHSTLASDNQKAQIGLEKATGTIKRELGKNLTMYKIPDLQFVKDESIEYGNKIDEMLRNLDKKD.

This sequence belongs to the RbfA family. In terms of assembly, monomer. Binds 30S ribosomal subunits, but not 50S ribosomal subunits or 70S ribosomes.

It is found in the cytoplasm. One of several proteins that assist in the late maturation steps of the functional core of the 30S ribosomal subunit. Associates with free 30S ribosomal subunits (but not with 30S subunits that are part of 70S ribosomes or polysomes). Required for efficient processing of 16S rRNA. May interact with the 5'-terminal helix region of 16S rRNA. In Streptococcus agalactiae, this protein is Ribosome-binding factor A.